A 454-amino-acid polypeptide reads, in one-letter code: GA-binding protein alpha chain (454 aa).

The region spanning 168-251 (AALEGYRKEQ…SHLELLRKYV (84 aa)) is the PNT domain. The tract at residues 297–316 (QRAPRISGEDRSSPGNRTGN) is disordered. Serine 303 is subject to Phosphoserine. Residues 320 to 400 (IQLWQFLLEL…QGKRFVYKFV (81 aa)) constitute a DNA-binding region (ETS).

This sequence belongs to the ETS family. Heterotetramer of two alpha and two beta subunits.

It localises to the nucleus. Its function is as follows. Transcription factor capable of interacting with purine rich repeats (GA repeats). Positively regulates transcription of transcriptional repressor RHIT/ZNF205. (Microbial infection) Necessary for the expression of the Adenovirus E4 gene. The sequence is that of GA-binding protein alpha chain (GABPA) from Homo sapiens (Human).